Consider the following 267-residue polypeptide: Apolipoprotein A-I (267 aa).

The signal sequence occupies residues 1–18 (MKAAVLTLAVLFLTGSQA). A run of 2 repeats spans residues 68–89 (LKLL…EDLG) and 90–111 (PVTQ…QEMS). The tract at residues 68 to 267 (LKLLDNWDSL…EEYAKKLSSQ (200 aa)) is 10 X approximate tandem repeats. Residue Met110 is modified to Methionine sulfoxide. The stretch at 112-122 (KDLEEVKAKVQ) is one 3; half-length repeat. A run of 5 repeats spans residues 123-144 (PYLD…QKLE), 145-166 (PLRT…EKLS), 167-188 (PLAE…TQLA), 189-210 (PYSD…ESGG), and 211-232 (ASLA…EKAK). The stretch at 233-243 (PALEDLRQGLL) is one 9; half-length repeat. The stretch at 244–267 (PVLESFKVSFLSALEEYAKKLSSQ) is repeat 10.

Belongs to the apolipoprotein A1/A4/E family. Homodimer. Interacts with APOA1BP and CLU. Component of a sperm activating protein complex (SPAP), consisting of APOA1, an immunoglobulin heavy chain, an immunoglobulin light chain and albumin. Interacts with NDRG1. Interacts with SCGB3A2. Interacts with NAXE and YJEFN3. In terms of processing, glycosylated. Palmitoylated. Post-translationally, phosphorylation sites are present in the extracellular medium.

It is found in the secreted. In terms of biological role, participates in the reverse transport of cholesterol from tissues to the liver for excretion by promoting cholesterol efflux from tissues and by acting as a cofactor for the lecithin cholesterol acyltransferase (LCAT). As part of the SPAP complex, activates spermatozoa motility. The polypeptide is Apolipoprotein A-I (APOA1) (Cebus imitator (Panamanian white-faced capuchin)).